Reading from the N-terminus, the 210-residue chain is Outer-membrane lipoprotein LolB (210 aa).

The first 19 residues, 1-19 (MNHLKSFFTALVAGFILTA), serve as a signal peptide directing secretion. Residue cysteine 20 is the site of N-palmitoyl cysteine attachment. Cysteine 20 carries the S-diacylglycerol cysteine lipid modification.

The protein belongs to the LolB family. Monomer.

It is found in the cell outer membrane. Its function is as follows. Plays a critical role in the incorporation of lipoproteins in the outer membrane after they are released by the LolA protein. The polypeptide is Outer-membrane lipoprotein LolB (Mannheimia succiniciproducens (strain KCTC 0769BP / MBEL55E)).